A 130-amino-acid polypeptide reads, in one-letter code: Small ribosomal subunit protein uS4 (130 aa).

Lys64 is modified (N6-acetyllysine). Lys91 is covalently cross-linked (Glycyl lysine isopeptide (Lys-Gly) (interchain with G-Cter in SUMO2)). The 25-residue stretch at 106–130 (RRLQTQVFKLGLAXSIHHXRVLIRQ) folds into the S4 RNA-binding domain. Residue Lys114 is modified to N6-acetyllysine.

It belongs to the universal ribosomal protein uS4 family. Component of the small ribosomal subunit. Identified in a IGF2BP1-dependent mRNP granule complex containing untranslated mRNAs. Part of the small subunit (SSU) processome, composed of more than 70 proteins and the RNA chaperone small nucleolar RNA (snoRNA) U3.

The protein localises to the cytoplasm. The protein resides in the nucleus. It is found in the nucleolus. Its function is as follows. Component of the small ribosomal subunit. The ribosome is a large ribonucleoprotein complex responsible for the synthesis of proteins in the cell. Part of the small subunit (SSU) processome, first precursor of the small eukaryotic ribosomal subunit. During the assembly of the SSU processome in the nucleolus, many ribosome biogenesis factors, an RNA chaperone and ribosomal proteins associate with the nascent pre-rRNA and work in concert to generate RNA folding, modifications, rearrangements and cleavage as well as targeted degradation of pre-ribosomal RNA by the RNA exosome. The polypeptide is Small ribosomal subunit protein uS4 (RPS9) (Sus scrofa (Pig)).